The primary structure comprises 459 residues: MAPPTKRTRVEMAESSNKRMKPSETVPEDVLELMMSTYLPVQSLLTTRVLSKRFRETEVRSLDLDFSGIYSRRRRKVEVVGIIEKVFNQHKGSEIHRFVLLLNHIGVEDKIISWTNTCFDKNIKELVLDFSKSRKVMAIPIDFSAVESLQVLKLRWCKFEIPDSSPKGLKLLKTLSLMRTQVMVKTIDAIFNNCIHLESLELIECRMDGILSIRAQNHKKFKSLVVSFMPDLRHIRLDAPTLENYKYDGYVICVNILITNALKEANLYYTRIRRLYHQKSDLVDTLRFYTRLTVLATTTIFLEALTKRYVGEGRLENPPFKFENLTEFKISFITPTFCTLFDIAEFLKECPKLKQVVIDIQNFTFEPQMYFWEIHHKAQIQNTSNNNYLLKCLTDVKIIGYKGHWHELDIVEFFVKNAPSLKRLELQMPKNAKNDAHTPDVARIKLIKTIFSGVKVTEV.

Positions 1-25 (MAPPTKRTRVEMAESSNKRMKPSET) are disordered. Residues 21–69 (KPSETVPEDVLELMMSTYLPVQSLLTTRVLSKRFRETEVRSLDLDFSGI) form the F-box domain. Residues 396 to 428 (VKIIGYKGHWHELDIVEFFVKNAPSLKRLELQM) form the FBD domain.

The polypeptide is FBD-associated F-box protein At1g61320 (Arabidopsis thaliana (Mouse-ear cress)).